The sequence spans 388 residues: Pepsin A-2/A-3 (388 aa).

Positions 1–15 are cleaved as a signal peptide; that stretch reads MKWLLLLGLVALSEC. 2 consecutive propeptides (activation peptide) follow at residues 16–40 and 41–62; these read IIHK…LLKD and FLKK…APTL. The region spanning 76 to 385 is the Peptidase A1 domain; that stretch reads YFGTIGIGTP…DRANNQVGLA (310 aa). Residue D94 is part of the active site. Residues C107 and C112 are joined by a disulfide bond. At S130 the chain carries Phosphoserine. A disulfide bridge connects residues C268 and C272. Residue D277 is part of the active site. A disulfide bond links C311 and C344.

It belongs to the peptidase A1 family. In terms of processing, pepsin A-2 is phosphorylated, but not pepsin A-3. Each pepsinogen is converted to corresponding pepsin at pH 2.0 in part as a result of the release of a 47 AA activation segment and in part as a result of stepwise proteolytic cleavage via an intermediate form(s).

Its subcellular location is the secreted. The catalysed reaction is Preferential cleavage: hydrophobic, preferably aromatic, residues in P1 and P1' positions. Cleaves 1-Phe-|-Val-2, 4-Gln-|-His-5, 13-Glu-|-Ala-14, 14-Ala-|-Leu-15, 15-Leu-|-Tyr-16, 16-Tyr-|-Leu-17, 23-Gly-|-Phe-24, 24-Phe-|-Phe-25 and 25-Phe-|-Tyr-26 bonds in the B chain of insulin.. Shows particularly broad specificity; although bonds involving phenylalanine and leucine are preferred, many others are also cleaved to some extent. This Macaca fuscata fuscata (Japanese macaque) protein is Pepsin A-2/A-3.